An 868-amino-acid chain; its full sequence is mRNA-capping enzyme (868 aa).

The active-site N6-GMP-lysine intermediate is lysine 282. The mRNA cap 0 methyltransferase domain occupies 594–868 (GIYRAQTALI…LFGFICLRKN (275 aa)). S-adenosyl-L-methionine-binding positions include lysine 607, glycine 624, aspartate 646, and 710-712 (LFI).

The protein in the N-terminal section; belongs to the dsDNA virus mRNA guanylyltransferase family. This sequence in the C-terminal section; belongs to the class I-like SAM-binding methyltransferase superfamily. mRNA cap 0 methyltransferase family. In terms of assembly, part of the viral DNA-directed RNA polymerase that consists of 8 polII-like subunits (RPB1, RPB2, RPB3, RPB5, RPB6, RPB7, RPB9, RPB10), a capping enzyme and a termination factor.

It localises to the virion. It catalyses the reaction a 5'-end triphospho-ribonucleoside in mRNA + H2O = a 5'-end diphospho-ribonucleoside in mRNA + phosphate + H(+). The catalysed reaction is a 5'-end diphospho-ribonucleoside in mRNA + GTP + H(+) = a 5'-end (5'-triphosphoguanosine)-ribonucleoside in mRNA + diphosphate. The enzyme catalyses a 5'-end (5'-triphosphoguanosine)-ribonucleoside in mRNA + S-adenosyl-L-methionine = a 5'-end (N(7)-methyl 5'-triphosphoguanosine)-ribonucleoside in mRNA + S-adenosyl-L-homocysteine. The protein operates within mRNA processing; mRNA capping. Probably catalyzes the second reaction in the mRNA cap formation pathway. Forms a covalent complex with GTP. The protein is mRNA-capping enzyme of Ornithodoros (relapsing fever ticks).